The chain runs to 117 residues: Hemerythrin subunit alpha (117 aa).

Fe cation is bound by residues His-24, His-53, Glu-57, His-72, His-76, His-105, and Asp-110.

This sequence belongs to the hemerythrin family. Octamer composed of two types of chains: alpha and beta.

Functionally, hemerythrin is a respiratory protein in blood cells of certain marine worms. The oxygen-binding site in each chain contains two iron atoms. The protein is Hemerythrin subunit alpha of Lingula reevii (Inarticulated brachiopod).